Reading from the N-terminus, the 860-residue chain is MAPAGCCCCCCFWGGAVAAAGAARRVLLLLLLGVLSAGLRPGALATEHYSPLSLLKQELQHRQQQEAPAGGGGCSPQSGDWGDQYSAECGESSFLNFHDSDCEPKGSSPCDSLLSLNTEKILSQAKSIAEQKRFPFATDNDSTNEELAIAYVLIGSGLYDEAIRHFSTMLQEEPDLVSAIYGRGIAYGKKGLHDIKNAELALFELSRVITLEPDRPEVFEQRAEILSPLGRINEAVNDLTKAIQLQPSARLYRHRGTLYFISEDYATAHEDFQQSLELNKNQPIAMLYKGLTFFHRGLLKEAIESFKEALKQKVDFIDAYKSLGQAYRELGNFEAATESFQKALLLNQNHVQTLQLRGMMLYHHGSLQEALKNFKRCLQLEPYNEVCQYMKGLSHVAMGQFYEGIKAQTKVMLNDPLPGQKASPEYLKVKYLREYSRYLHAHLDTPLTEYNIDVDLPGSFKDHWAKNLPFLIEDYEEQPGLQPHIKDVLHQNFESYKPEVQELICVADRLGSLMQYETPGFLPNKRIHRAMGLAALEVMQAVQRTWTNSKVRMNGKTRLMQWRDMFDIAVKWRRIADPDQPVLWLDQMPARSLSRGFNNHINLIRGQVINMRYLEYFEKILHFIKDRILVYHGANNPKGLLEVREALEKVHKVEDLLPIMKQFNTKTKDGFTVNTKVPSLKDQGKEYDGFTITITGDKVGNILFSVETQTTEERTQLYHAEIDALYKDLTAKGKVLILSSEFGEADAVCNLILSLVYYFYNLMPLSRGSSVIAYSVIVGALMASGKEVAGKIPKGKLVDFEAMTAPGSEAFSKVAKSWMNLKSISPSYKTLPSVSETFPTLRSMIEVLNTDSSPRCLKKL.

TPR repeat units follow at residues T143–L176, P216–S248, A249–Q282, I284–F316, I317–H350, Q352–N384, and V386–P418.

The protein is Tetratricopeptide repeat protein 13 (TTC13) of Homo sapiens (Human).